The following is a 292-amino-acid chain: Hydroxysqualene synthase (292 aa).

Belongs to the phytoene/squalene synthase family. HpnC subfamily.

The enzyme catalyses presqualene diphosphate + H2O = hydroxysqualene + diphosphate. Its pathway is secondary metabolite biosynthesis; hopanoid biosynthesis. Involved in the biosynthesis of the hopanoid precursor squalene (SQ) from farnesyl diphosphate (FPP). Catalyzes the second step, the conversion of presqualene diphosphate (PSPP) to hydroxysqualene (HSQ). The chain is Hydroxysqualene synthase from Rhodopseudomonas palustris (strain ATCC BAA-98 / CGA009).